Here is a 79-residue protein sequence, read N- to C-terminus: U-actitoxin-Oulsp1 (79 aa).

A signal peptide spans 1-21; the sequence is MNTKLVVVFLLSAILFVSVTA. A propeptide spanning residues 22-43 is cleaved from the precursor; that stretch reads SRPGKDLERDEAYETYDDENKR. One can recognise a ShKT domain in the interval 45–79; the sequence is CKDVFPAATCRHAKSVGNCSSEKYKRNCAITCGAC. 3 disulfides stabilise this stretch: cysteine 45/cysteine 79, cysteine 54/cysteine 72, and cysteine 63/cysteine 76. The interval 67–68 is crucial for binding to potassium channels; the sequence is KY.

Belongs to the sea anemone type 1 potassium channel toxin family. Type 1b subfamily. In terms of processing, two similar peptides (OspTx2a-p1 and -p2) are obtained after synthesis and oxidative folding. They may differ by a D-Cys at position 76 (corresponding to OspTx2a-p2). Since C-terminal Cys residues are prone to racemization during solid-phase peptide synthesis, and if the presence of a D-amino acid is correct, it is probable that OspTx2a-p1 (L-Cys-76 form) corresponds to the native peptide.

It localises to the secreted. Its function is as follows. Toxin that weakly blocks the two voltage-gated potassium channels on Kv1.2/KCNA2 (IC(50)=1.8-2.5 uM) and Kv1.6/KCNA6 (IC(50)=5.6-6.2 uM). The sequence is that of U-actitoxin-Oulsp1 from Oulactis sp. (Sea anemone).